Here is a 105-residue protein sequence, read N- to C-terminus: Small ribosomal subunit protein uS10 (105 aa).

It belongs to the universal ribosomal protein uS10 family. Part of the 30S ribosomal subunit.

In terms of biological role, involved in the binding of tRNA to the ribosomes. In Chlamydia pneumoniae (Chlamydophila pneumoniae), this protein is Small ribosomal subunit protein uS10.